Here is a 364-residue protein sequence, read N- to C-terminus: Tyrosine--tRNA ligase (364 aa).

L-tyrosine contacts are provided by Tyr-41, Tyr-167, Gln-171, Asp-174, and Gln-189. The short motif at 238–242 (KMSKS) is the 'KMSKS' region element. An ATP-binding site is contributed by Lys-241.

It belongs to the class-I aminoacyl-tRNA synthetase family. TyrS type 4 subfamily. In terms of assembly, homodimer.

The protein localises to the cytoplasm. It carries out the reaction tRNA(Tyr) + L-tyrosine + ATP = L-tyrosyl-tRNA(Tyr) + AMP + diphosphate + H(+). Catalyzes the attachment of tyrosine to tRNA(Tyr) in a two-step reaction: tyrosine is first activated by ATP to form Tyr-AMP and then transferred to the acceptor end of tRNA(Tyr). This chain is Tyrosine--tRNA ligase, found in Sulfurisphaera tokodaii (strain DSM 16993 / JCM 10545 / NBRC 100140 / 7) (Sulfolobus tokodaii).